We begin with the raw amino-acid sequence, 476 residues long: Angiotensinogen (476 aa).

The signal sequence occupies residues 1–24; that stretch reads MAPAGVSLRATILCLLAWAGLAAG. Beta-decarboxylated aspartate; in form angiotensin-A is present on Asp-25. N-linked (GlcNAc...) asparagine glycans are attached at residues Asn-38, Asn-161, Asn-295, and Asn-319. Cys-42 and Cys-162 form a disulfide bridge.

This sequence belongs to the serpin family. In terms of assembly, during pregnancy, exists as a disulfide-linked 2:2 heterotetramer with the proform of PRG2 and as a complex (probably a 2:2:2 heterohexamer) with pro-PRG2 and C3dg. Post-translationally, beta-decarboxylation of Asp-25 in angiotensin-2, by mononuclear leukocytes produces alanine. The resulting peptide form, angiotensin-A, has the same affinity for the AT1 receptor as angiotensin-2, but a higher affinity for the AT2 receptor. In terms of processing, in response to low blood pressure, the enzyme renin/REN cleaves angiotensinogen to produce angiotensin-1. Angiotensin-1 is a substrate of ACE (angiotensin converting enzyme) that removes a dipeptide to yield the physiologically active peptide angiotensin-2. Angiotensin-1 and angiotensin-2 can be further processed to generate angiotensin-3, angiotensin-4. Angiotensin 1-9 is cleaved from angiotensin-1 by ACE2 and can be further processed by ACE to produce angiotensin 1-7, angiotensin 1-5 and angiotensin 1-4. Angiotensin 1-7 has also been proposed to be cleaved from angiotensin-2 by ACE2 or from angiotensin-1 by MME (neprilysin). The disulfide bond is labile. Angiotensinogen is present in the circulation in a near 40:60 ratio with the oxidized disulfide-bonded form, which preferentially interacts with receptor-bound renin. As to expression, expressed by the liver and secreted in plasma.

It is found in the secreted. Its function is as follows. Essential component of the renin-angiotensin system (RAS), a potent regulator of blood pressure, body fluid and electrolyte homeostasis. Acts directly on vascular smooth muscle as a potent vasoconstrictor, affects cardiac contractility and heart rate through its action on the sympathetic nervous system, and alters renal sodium and water absorption through its ability to stimulate the zona glomerulosa cells of the adrenal cortex to synthesize and secrete aldosterone. Acts by binding to angiotensin receptors AGTR1 and AGTR2. Also binds the DEAR/FBXW7-AS1 receptor. In terms of biological role, stimulates aldosterone release. Functionally, is a ligand for the G-protein coupled receptor MAS1. Has vasodilator and antidiuretic effects. Has an antithrombotic effect that involves MAS1-mediated release of nitric oxide from platelets. The sequence is that of Angiotensinogen from Homo sapiens (Human).